The following is a 301-amino-acid chain: Rhodopsin (301 aa).

Residues 1–18 (LHMIHLHWYQYPPMNPMM) are Extracellular-facing. The chain crosses the membrane as a helical span at residues 19–43 (YPLLLIFMLFTGILCLAGNFVTIWV). Residues 44 to 55 (FMNTKSLRTPAN) are Cytoplasmic-facing. A helical transmembrane segment spans residues 56-78 (LLVVNLAMSDFLMMFTMFPPMMV). Over 79 to 92 (TCYYHTWTLGPTFC) the chain is Extracellular. Cysteine 92 and cysteine 169 form a disulfide bridge. A helical membrane pass occupies residues 93 to 115 (QVYAFLGNLCGCASIWTMVFITF). The 'Ionic lock' involved in activated form stabilization signature appears at 116–118 (DRY). At 116–134 (DRYNVIVKGVAGEPLSNKK) the chain is on the cytoplasmic side. The helical transmembrane segment at 135-155 (AAMWILSVWVLSTAWCMAPFF) threads the bilayer. Over 156–182 (GWNSYVPEGNLTGCGTDYLSEDILSRS) the chain is Extracellular. Asparagine 165 is a glycosylation site (N-linked (GlcNAc...) asparagine). Residues 183 to 204 (YLYIYSTWVYFLPLTITIYCYV) traverse the membrane as a helical segment. Residues 205–245 (FIIKAVAAHEKGMRDQAKKMGIKSLRNEEAQKTSAECRLAK) lie on the Cytoplasmic side of the membrane. A helical membrane pass occupies residues 246-267 (IAMTTVALWFIAWTPYLLINWV). Residues 268–278 (GMFARSYLSPV) lie on the Extracellular side of the membrane. A helical membrane pass occupies residues 279–300 (YTIWGYVFAKANAVYNPIVYAI). Lysine 288 carries the N6-(retinylidene)lysine modification.

This sequence belongs to the G-protein coupled receptor 1 family. Opsin subfamily. Homodimer. Interacts with GNAQ. Contains one covalently linked retinal chromophore.

The protein resides in the cell projection. It is found in the rhabdomere membrane. Functionally, photoreceptor required for image-forming vision at low light intensity. Can use both retinal and 3-dehydroretinal as visual pigment. Light-induced isomerization of 11-cis to all-trans retinal triggers a conformational change that activates signaling via G-proteins. Signaling via GNAQ probably mediates the activation of phospholipase C. The chain is Rhodopsin (RHO) from Faxonius virilis (Virile crayfish).